Reading from the N-terminus, the 58-residue chain is UPF0391 membrane protein OCAR_5266/OCA5_c27040 (58 aa).

A run of 2 helical transmembrane segments spans residues 4 to 24 and 30 to 50; these read WVVT…GGIA and IAKI…VVGL.

The protein belongs to the UPF0391 family.

It is found in the cell membrane. This is UPF0391 membrane protein OCAR_5266/OCA5_c27040 from Afipia carboxidovorans (strain ATCC 49405 / DSM 1227 / KCTC 32145 / OM5) (Oligotropha carboxidovorans).